A 378-amino-acid polypeptide reads, in one-letter code: 3-dehydroquinate synthase (378 aa).

NAD(+) contacts are provided by residues 115-119 (GVVGD), 139-140 (TS), K152, and K161. Zn(2+) is bound by residues E194, H256, and H275.

The protein belongs to the sugar phosphate cyclases superfamily. Dehydroquinate synthase family. It depends on Co(2+) as a cofactor. Zn(2+) is required as a cofactor. The cofactor is NAD(+).

The protein resides in the cytoplasm. It catalyses the reaction 7-phospho-2-dehydro-3-deoxy-D-arabino-heptonate = 3-dehydroquinate + phosphate. Its pathway is metabolic intermediate biosynthesis; chorismate biosynthesis; chorismate from D-erythrose 4-phosphate and phosphoenolpyruvate: step 2/7. In terms of biological role, catalyzes the conversion of 3-deoxy-D-arabino-heptulosonate 7-phosphate (DAHP) to dehydroquinate (DHQ). The chain is 3-dehydroquinate synthase from Brucella suis (strain ATCC 23445 / NCTC 10510).